The following is a 275-amino-acid chain: Dihydropteroate synthase (275 aa).

In terms of domain architecture, Pterin-binding spans 15–267 (PQIMGILNFT…DVAATSDMLK (253 aa)). Residue Asn-22 coordinates Mg(2+). (7,8-dihydropterin-6-yl)methyl diphosphate-binding positions include Thr-62, Asp-96, Asn-115, Asp-185, Lys-221, and 255 to 257 (RVH).

Belongs to the DHPS family. As to quaternary structure, homodimer. Mg(2+) is required as a cofactor.

The catalysed reaction is (7,8-dihydropterin-6-yl)methyl diphosphate + 4-aminobenzoate = 7,8-dihydropteroate + diphosphate. It participates in cofactor biosynthesis; tetrahydrofolate biosynthesis; 7,8-dihydrofolate from 2-amino-4-hydroxy-6-hydroxymethyl-7,8-dihydropteridine diphosphate and 4-aminobenzoate: step 1/2. In terms of biological role, catalyzes the condensation of para-aminobenzoate (pABA) with 6-hydroxymethyl-7,8-dihydropterin diphosphate (DHPt-PP) to form 7,8-dihydropteroate (H2Pte), the immediate precursor of folate derivatives. This Haemophilus influenzae (strain ATCC 51907 / DSM 11121 / KW20 / Rd) protein is Dihydropteroate synthase (folP-A).